The chain runs to 350 residues: Hydroxymethylglutaryl-CoA synthase (350 aa).

The active-site Proton donor/acceptor is glutamate 83. The Acyl-thioester intermediate role is filled by cysteine 115. (3S)-3-hydroxy-3-methylglutaryl-CoA contacts are provided by cysteine 115 and threonine 156. Arginine 204 is a binding site for CoA. 2 residues coordinate (3S)-3-hydroxy-3-methylglutaryl-CoA: threonine 206 and histidine 239. The active-site Proton donor/acceptor is the histidine 239. CoA is bound at residue lysine 244. (3S)-3-hydroxy-3-methylglutaryl-CoA contacts are provided by asparagine 271 and serine 301.

This sequence belongs to the thiolase-like superfamily. Archaeal HMG-CoA synthase family. In terms of assembly, interacts with acetoacetyl-CoA thiolase that catalyzes the precedent step in the pathway and with a DUF35 protein. The acetoacetyl-CoA thiolase/HMG-CoA synthase complex channels the intermediate via a fused CoA-binding site, which allows for efficient coupling of the endergonic thiolase reaction with the exergonic HMGCS reaction.

The enzyme catalyses acetoacetyl-CoA + acetyl-CoA + H2O = (3S)-3-hydroxy-3-methylglutaryl-CoA + CoA + H(+). It participates in metabolic intermediate biosynthesis; (R)-mevalonate biosynthesis; (R)-mevalonate from acetyl-CoA: step 2/3. Functionally, catalyzes the condensation of acetyl-CoA with acetoacetyl-CoA to form 3-hydroxy-3-methylglutaryl-CoA (HMG-CoA). Functions in the mevalonate (MVA) pathway leading to isopentenyl diphosphate (IPP), a key precursor for the biosynthesis of isoprenoid compounds that are building blocks of archaeal membrane lipids. This chain is Hydroxymethylglutaryl-CoA synthase, found in Thermococcus gammatolerans (strain DSM 15229 / JCM 11827 / EJ3).